The chain runs to 37 residues: MAETAEDLAEKKKKRTFRKFTYRGVDLDQLLDMNMDQ.

Belongs to the universal ribosomal protein uS19 family.

The protein is Small ribosomal subunit protein uS19 (RPS15) of Helix lucorum (Snail).